Consider the following 178-residue polypeptide: Large ribosomal subunit protein bL25 (178 aa).

Belongs to the bacterial ribosomal protein bL25 family. CTC subfamily. Part of the 50S ribosomal subunit; part of the 5S rRNA/L5/L18/L25 subcomplex. Contacts the 5S rRNA. Binds to the 5S rRNA independently of L5 and L18.

Functionally, this is one of the proteins that binds to the 5S RNA in the ribosome where it forms part of the central protuberance. The protein is Large ribosomal subunit protein bL25 of Wolinella succinogenes (strain ATCC 29543 / DSM 1740 / CCUG 13145 / JCM 31913 / LMG 7466 / NCTC 11488 / FDC 602W) (Vibrio succinogenes).